We begin with the raw amino-acid sequence, 629 residues long: Dual specificity tyrosine-phosphorylation-regulated kinase 1B (629 aa).

Tyrosine 63 carries the phosphotyrosine modification. Residues 67-86 (KKRRAQQAPPQDSSTKKEKK) are disordered. A Bipartite nuclear localization signal motif is present at residues 69-86 (RRAQQAPPQDSSTKKEKK). A phosphotyrosine mark is found at tyrosine 92 and tyrosine 111. A Protein kinase domain is found at 111–431 (YEIDSLIGKG…PLGALQHGFF (321 aa)). 117-125 (IGKGSFGQV) lines the ATP pocket. A Phosphotyrosine modification is found at tyrosine 129. Lysine 140 is an ATP binding site. At tyrosine 171 the chain carries Phosphotyrosine. Position 190-193 (190-193 (FELL)) interacts with ATP. Aspartate 239 serves as the catalytic Proton acceptor. At serine 262 the chain carries Phosphoserine. Phosphotyrosine; by autocatalysis is present on tyrosine 271. A Phosphotyrosine modification is found at tyrosine 273. The interval 380 to 399 (GVQTGGPGGRRAGEPGHSPA) is disordered. Tyrosine 401 is subject to Phosphotyrosine. Disordered stretches follow at residues 436–480 (DEAT…SNDN) and 496–629 (PITD…AASS). The span at 438–477 (ATNTGPAGSSASTSPAPLDTCPSSSTASSISSSGGSSGSS) shows a compositional bias: low complexity. Residues 480-520 (NRAYRYSNRYCGGPGPPITDCEMNSPQVLPSQPLRPWAGGD) are interaction with RANBP9. 2 stretches are compositionally biased toward pro residues: residues 552–562 (PPSPTSPPPPE) and 574–585 (DCSPPPPAPAPQ). Serine 624 is modified (phosphoserine).

Belongs to the protein kinase superfamily. CMGC Ser/Thr protein kinase family. MNB/DYRK subfamily. Dimer. Interacts with DCOHM, MAP2K3/MKK3, RANBP9 and TCF1/HNF1A. Part of a complex consisting of RANBP9, RAN, DYRK1B and COPS5. Interacts with DCAF7. Interacts with RNF169. In terms of processing, phosphorylated by MAP kinase. Tyrosine phosphorylation may be required for dimerization. As to expression, isoform 1 and isoform 2 are broadly expressed. Isoform 3 seems specific for skeletal muscle (at protein level).

It localises to the nucleus. The protein localises to the nucleolus. Its subcellular location is the chromosome. It carries out the reaction L-seryl-[protein] + ATP = O-phospho-L-seryl-[protein] + ADP + H(+). The catalysed reaction is L-threonyl-[protein] + ATP = O-phospho-L-threonyl-[protein] + ADP + H(+). The enzyme catalyses L-tyrosyl-[protein] + ATP = O-phospho-L-tyrosyl-[protein] + ADP + H(+). With respect to regulation, inhibited by RANBP9. Its function is as follows. Dual-specificity kinase which possesses both serine/threonine and tyrosine kinase activities. Plays an essential role in ribosomal DNA (rDNA) double-strand break repair and rDNA copy number maintenance. During DNA damage, mediates transcription silencing in part via phosphorylating and enforcing DSB accumulation of the histone methyltransferase EHMT2. Enhances the transcriptional activity of TCF1/HNF1A and FOXO1. Inhibits epithelial cell migration. Mediates colon carcinoma cell survival in mitogen-poor environments. Inhibits the SHH and WNT1 pathways, thereby enhancing adipogenesis. In addition, promotes expression of the gluconeogenic enzyme glucose-6-phosphatase catalytic subunit 1 (G6PC1). This chain is Dual specificity tyrosine-phosphorylation-regulated kinase 1B (Dyrk1b), found in Mus musculus (Mouse).